We begin with the raw amino-acid sequence, 207 residues long: N-(5'-phosphoribosyl)anthranilate isomerase (207 aa).

The protein belongs to the TrpF family.

The catalysed reaction is N-(5-phospho-beta-D-ribosyl)anthranilate = 1-(2-carboxyphenylamino)-1-deoxy-D-ribulose 5-phosphate. Its pathway is amino-acid biosynthesis; L-tryptophan biosynthesis; L-tryptophan from chorismate: step 3/5. This chain is N-(5'-phosphoribosyl)anthranilate isomerase, found in Legionella pneumophila (strain Lens).